The sequence spans 289 residues: UTP--glucose-1-phosphate uridylyltransferase 2 (289 aa).

The protein belongs to the UDPGP type 2 family.

The catalysed reaction is alpha-D-glucose 1-phosphate + UTP + H(+) = UDP-alpha-D-glucose + diphosphate. The protein operates within glycolipid metabolism; diglucosyl-diacylglycerol biosynthesis. Catalyzes the formation of UDP-glucose from glucose-1-phosphate and UTP. This is an intermediate step in the biosynthesis of diglucosyl-diacylglycerol (Glc2-DAG), i.e. a glycolipid found in the membrane, which is also used as a membrane anchor for lipoteichoic acid (LTA). This Staphylococcus saprophyticus subsp. saprophyticus (strain ATCC 15305 / DSM 20229 / NCIMB 8711 / NCTC 7292 / S-41) protein is UTP--glucose-1-phosphate uridylyltransferase 2 (gtaB2).